A 4836-amino-acid polypeptide reads, in one-letter code: E3 ubiquitin-protein ligase HERC2 (4836 aa).

The tract at residues 58–90 (LPLRKDDGVDAQSGTKKEDLNDKEKKEEEETPA) is disordered. Basic and acidic residues predominate over residues 72–85 (TKKEDLNDKEKKEE). At Thr273 the chain carries Phosphothreonine. An RCC1 1-1 repeat occupies 416-462 (PTSHKGSLQEVIGWGLIGWKYYANVIGPIQCEGLASLGVMQVACAEK). The stretch at 463 to 513 (RFLILSRNGRVYTQAYNSDMLAPQLVQGLASRNIVKIAAHSDGHHYLALAA) is one RCC1 1-2 repeat. The stretch at 514 to 569 (TGEVYSWGCGDGGRLGHGDTVPLEEPKVISAFSGKQAGKHVVHIACGSTYSAAITA) is one RCC1 1-3 repeat. Residues 570–621 (EGELYTWGRGNYGRLGHGSSEDEAIPMLVAGLKGLKVIDVACGSGDAQTLAV) form an RCC1 1-4 repeat. One copy of the RCC1 1-5 repeat lies at 624-675 (NGQVWSWGDGDYGKLGRGGSDGCKTPKLIEKLQDLDVIKVRCGSQFSIALTK). Thr648 is modified (phosphothreonine). The stretch at 676–727 (DGQVYSWGKGDNQRLGHGTEEHVRYPKLLEGLQGKKVIDVAAGSTHCLALTE) is one RCC1 1-6 repeat. The RCC1 1-7 repeat unit spans residues 729–779 (SEVHSWGSNDQCQHFDTLRVTKPEPTALPGLDSKHIVGIACGPAQSFAWSS). Residues 948 to 981 (ALNAAITAEIQDIEAKKEAQKEKEIDEQEASAST) adopt a coiled-coil conformation. One can recognise a Cytochrome b5 heme-binding domain in the interval 1208-1284 (VTLIRKADLE…MHAFCVGQYL (77 aa)). Ser1578 bears the Phosphoserine mark. An MIB/HERC2 domain is found at 1860–1933 (SGPELAAMMK…KYDLKLVELP (74 aa)). Ser1943 is modified (phosphoserine). The residue at position 1945 (Thr1945) is a Phosphothreonine. The interval 2351–2376 (GTGTLQTDDGAAASPDLGDMSPEGPQ) is disordered. The residue at position 2455 (Ser2455) is a Phosphoserine. The CPH domain maps to 2555-2631 (RADFLSNDDY…RYIHVELIGY (77 aa)). The ZZ-type zinc finger occupies 2704–2756 (HPGVTCDGCQTFPINGSRFKCRNCDDFDFCETCFKTKKHNTRHTFGRINEPGQ). 8 residues coordinate Zn(2+): Cys2709, Cys2712, Cys2724, Cys2727, Cys2733, Cys2736, His2742, and His2746. A DOC domain is found at 2760-2937 (FCGRSGKQLK…ASDNEEEEDD (178 aa)). Residues 2928–2947 (ASDNEEEEDDKGSTGSLIRK) are disordered. Position 2929 is a phosphoserine (Ser2929). The RCC1 2-1 repeat unit spans residues 2959–3010 (RTKVFVWGLNDKDQLGGLKGSKIKVPSFSETLSALNVVQVAGGSKSLFAVTV). The stretch at 3011-3065 (EGKVYSCGEATNGRLGLGMSSGTVPIPRQITALSSYVVKKVAVHSGGRHATALTV) is one RCC1 2-2 repeat. One copy of the RCC1 2-3 repeat lies at 3066–3117 (DGKVFSWGEGDDGKLGHFSRMNCDKPRLIEALKTKRIRDIACGSSHSAALTS). One copy of the RCC1 2-4 repeat lies at 3119 to 3169 (GELYTWGLGEYGRLGHGDNTTQLKPKMVKVLLGHRVIQVACGSRDAQTLAL). Residues 3172 to 3223 (EGLVFSWGDGDFGKLGRGGSEGCNIPQNIERLNGQGVCQIECGAQFSLALTK) form an RCC1 2-5 repeat. The RCC1 2-6 repeat unit spans residues 3225–3275 (GVVWTWGKGDYFRLGHGSDVHVRKPQVVEGLRGKKIVHVAVGALHCLAVTD). The stretch at 3276 to 3327 (SGQVYAWGDNDHGQQGNGTTTVNRKPTLVQGLEGQKITRVACGSSHSVAWTT) is one RCC1 2-7 repeat. Disordered regions lie at residues 3479–3499 (DAVT…RPFI), 3517–3537 (KTKE…QSLD), and 3604–3632 (SQSG…SGTV). A compositionally biased stretch (low complexity) spans 3480 to 3495 (AVTPSAVTPSAPSASS). Polar residues-rich tracts occupy residues 3604 to 3613 (SQSGRLSSQP) and 3620 to 3631 (HPYTDDTSTSGT). One copy of the RCC1 3-1 repeat lies at 3953-4004 (SGTIYGWGHNHRGQLGGIEGAKVKVPTPCEALATLRPVQLIGGEQTLFAVTA). The RCC1 3-2 repeat unit spans residues 4006 to 4058 (GKLYATGYGAGGRLGIGGTESVSTPTLLESIQHVFIKKVAVNSGGKHCLALSS). The stretch at 4060-4110 (GEVYSWGEAEDGKLGHGNRSPCDRPRVIESLRGIEVVDVAAGGAHSACVTA) is one RCC1 3-3 repeat. One copy of the RCC1 3-4 repeat lies at 4112–4164 (GDLYTWGKGRYGRLGHSDSEDQLKPKLVEALQGHRVIDIACGSGDAQTLCLTD). One copy of the RCC1 3-5 repeat lies at 4166-4216 (DTVWSWGDGDYGKLGRGGSDGCKVPMKIDSLTGLGVVKVECGSQFSVALTK). One copy of the RCC1 3-6 repeat lies at 4218 to 4268 (GAVYTWGKGDYHRLGHGSDDHVRRPRQVQGLQGKKVIAIATGSLHCVCCTE). The stretch at 4270 to 4320 (GEVYTWGDNDEGQLGDGTTNAIQRPRLVAALQGKKVNRVACGSAHTLAWST) is one RCC1 3-7 repeat. The HECT domain maps to 4459 to 4796 (DSLLLPHRVW…IHFCKSIDTD (338 aa)). The Glycyl thioester intermediate role is filled by Cys4764. Residues 4806-4836 (EPAADDSSEDSDNEDADSFASDSTQDYLTGH) form a disordered region. Positions 4808–4822 (AADDSSEDSDNEDAD) are enriched in acidic residues. Residues Ser4812, Ser4813, and Ser4816 each carry the phosphoserine modification. Thr4829 bears the Phosphothreonine mark.

Interacts (when phosphorylated at Thr-4829 and sumoylated) with RNF8 (via FHA domain); this interaction increases after ionising radiation (IR) treatment. Interacts with XPA. Interacts with NEURL4. Via its interaction with NEURL4, may indirectly interact with CCP110 and CEP97. Phosphorylation at Thr-4829 is required for interaction with RNF8. In terms of processing, sumoylated with SUMO1 by PIAS4 in response to double-strand breaks (DSBs), promoting the interaction with RNF8. As to expression, highest levels are found in brain and testis with lower levels in heart, lung, liver, skeletal muscle and kidney. Little expression detected in spleen.

The protein localises to the cytoplasm. It is found in the cytoskeleton. Its subcellular location is the microtubule organizing center. It localises to the centrosome. The protein resides in the centriole. The protein localises to the nucleus. The enzyme catalyses S-ubiquitinyl-[E2 ubiquitin-conjugating enzyme]-L-cysteine + [acceptor protein]-L-lysine = [E2 ubiquitin-conjugating enzyme]-L-cysteine + N(6)-ubiquitinyl-[acceptor protein]-L-lysine.. It functions in the pathway protein modification; protein ubiquitination. Functionally, E3 ubiquitin-protein ligase that regulates ubiquitin-dependent retention of repair proteins on damaged chromosomes. Recruited to sites of DNA damage in response to ionizing radiation (IR) and facilitates the assembly of UBE2N and RNF8 promoting DNA damage-induced formation of 'Lys-63'-linked ubiquitin chains. Acts as a mediator of binding specificity between UBE2N and RNF8. Involved in the maintenance of RNF168 levels. E3 ubiquitin-protein ligase that promotes the ubiquitination and proteasomal degradation of XPA which influences the circadian oscillation of DNA excision repair activity. By controlling the steady-state expression of the IGF1R receptor, indirectly regulates the insulin-like growth factor receptor signaling pathway. Also modulates iron metabolism by regulating the basal turnover of FBXL5. This is E3 ubiquitin-protein ligase HERC2 from Mus musculus (Mouse).